The sequence spans 380 residues: Set1 complex component swd3 (380 aa).

WD repeat units follow at residues 52–91 (GHEK…LECT), 94–133 (GHYR…SVRC), 136–177 (GHTN…RMLP), 179–219 (HSEP…KTLV), 221–262 (PINV…RIFD), 291–330 (NDSS…IIDD), and 335–374 (SDDP…SKHE). A Phosphoserine modification is found at Ser379.

In terms of assembly, component of the Set1 complex composed of ash2, sdc1, set1, shg1, spp1, swd1, swd2 and swd3.

The protein localises to the nucleus. The Set1 complex specifically methylates 'Lys-4' of histone H3. The sequence is that of Set1 complex component swd3 from Schizosaccharomyces pombe (strain 972 / ATCC 24843) (Fission yeast).